The primary structure comprises 1272 residues: Myosin-binding protein C, cardiac-type (1272 aa).

The interval 95 to 147 (KEPEKSEPVAPAEASPAPAASELPAPPVESNQNPEVPPAETQPEEPVDPIGLF) is disordered. Low complexity predominate over residues 102–117 (PVAPAEASPAPAASEL). The 116-residue stretch at 137-252 (PEEPVDPIGL…NLIVNEAPVS (116 aa)) folds into the Ig-like C2-type 1 domain. A Phosphoserine; by PKA and PKC modification is found at S265. Position 274 is a phosphothreonine; by PKA and PKC (T274). At S300 the chain carries Phosphoserine; by PKA. 4 consecutive Ig-like C2-type domains span residues 359–451 (KKST…VKEP), 452–542 (PILI…VQEK), 543–640 (KLEV…FVPR), and 644–763 (PKIH…ADIT). 2 consecutive Fibronectin type-III domains span residues 772–868 (PPEA…IAPP) and 870–965 (EPTH…VQEI). The Ig-like C2-type 6 domain occupies 969–1057 (PKICVPRHLR…ENMTDTVAIT (89 aa)). Positions 1066–1161 (PPQNIKLADV…TKNPAYIQKT (96 aa)) constitute a Fibronectin type-III 3 domain. S1169 is subject to Phosphoserine; by PKC. The region spanning 1179 to 1263 (PKFTHPLVNR…VNERGEAEIE (85 aa)) is the Ig-like C2-type 7 domain.

It belongs to the immunoglobulin superfamily. MyBP family. Substrate for phosphorylation by PKA and PKC. Reversible phosphorylation appears to modulate contraction. Expressed specifically in cardiac muscle among adult tissues, but is also expressed transiently in the skeletal muscle at early developmental stages. Isoform Type I is found in embryonic skeletal muscle and isoform Type II is found in both embryonic skeletal and cardiac muscle.

Its function is as follows. Thick filament-associated protein located in the crossbridge region of vertebrate striated muscle A bands. In vitro it binds MHC, F-actin and native thin filaments, and modifies the activity of actin-activated myosin ATPase. It may modulate muscle contraction or may play a more structural role. May be involved in the early phase of myofibrillogenesis. The polypeptide is Myosin-binding protein C, cardiac-type (MYBPC3) (Gallus gallus (Chicken)).